The sequence spans 444 residues: 23S rRNA (uracil(1939)-C(5))-methyltransferase RlmD (444 aa).

The region spanning arginine 5–glutamate 67 is the TRAM domain. The [4Fe-4S] cluster site is built by cysteine 80, cysteine 86, cysteine 89, and cysteine 168. Residues glutamine 276, phenylalanine 305, asparagine 310, glutamate 326, aspartate 353, and aspartate 374 each coordinate S-adenosyl-L-methionine. Cysteine 400 functions as the Nucleophile in the catalytic mechanism.

Belongs to the class I-like SAM-binding methyltransferase superfamily. RNA M5U methyltransferase family. RlmD subfamily.

The enzyme catalyses uridine(1939) in 23S rRNA + S-adenosyl-L-methionine = 5-methyluridine(1939) in 23S rRNA + S-adenosyl-L-homocysteine + H(+). In terms of biological role, catalyzes the formation of 5-methyl-uridine at position 1939 (m5U1939) in 23S rRNA. This Xanthomonas oryzae pv. oryzae (strain KACC10331 / KXO85) protein is 23S rRNA (uracil(1939)-C(5))-methyltransferase RlmD.